Reading from the N-terminus, the 257-residue chain is tRNA pseudouridine synthase A (257 aa).

D53 (nucleophile) is an active-site residue. Y111 serves as a coordination point for substrate.

This sequence belongs to the tRNA pseudouridine synthase TruA family. Homodimer.

The enzyme catalyses uridine(38/39/40) in tRNA = pseudouridine(38/39/40) in tRNA. In terms of biological role, formation of pseudouridine at positions 38, 39 and 40 in the anticodon stem and loop of transfer RNAs. In Xanthomonas axonopodis pv. citri (strain 306), this protein is tRNA pseudouridine synthase A.